Consider the following 212-residue polypeptide: Octanoyltransferase (212 aa).

The BPL/LPL catalytic domain maps to 31-209 (AETQDEIWLV…HFADLLGYNI (179 aa)). Substrate is bound by residues 70 to 77 (RGGQITYH), 138 to 140 (SLG), and 151 to 153 (GLA). Cysteine 169 serves as the catalytic Acyl-thioester intermediate.

Belongs to the LipB family.

The protein localises to the cytoplasm. It catalyses the reaction octanoyl-[ACP] + L-lysyl-[protein] = N(6)-octanoyl-L-lysyl-[protein] + holo-[ACP] + H(+). Its pathway is protein modification; protein lipoylation via endogenous pathway; protein N(6)-(lipoyl)lysine from octanoyl-[acyl-carrier-protein]: step 1/2. Catalyzes the transfer of endogenously produced octanoic acid from octanoyl-acyl-carrier-protein onto the lipoyl domains of lipoate-dependent enzymes. Lipoyl-ACP can also act as a substrate although octanoyl-ACP is likely to be the physiological substrate. The chain is Octanoyltransferase from Haemophilus influenzae (strain PittGG).